The primary structure comprises 312 residues: Phospho-N-acetylmuramoyl-pentapeptide-transferase (312 aa).

The next 9 helical transmembrane spans lie at 1–21 (MMVVAALLSWFLLGLFIHYSK), 48–68 (GVAFVLALLLVFVGLLAFGGI), 76–96 (EVMILLAALGMGVVGGIDDFL), 115–135 (FPLQVLVALLFAGFAAPLASH), 140–160 (GFMSIGGYPIFDMLFIAFVMV), 165–185 (AFNFTDGLDGLLAGVGMIVLL), 214–234 (VFMGDMGSHAIGAVAAGAYAL), 238–258 (VWLLPIAAIIPVAAVLSVVIQ), and 289–309 (VTLRFWVVTGIATALTWWLMG).

The protein belongs to the glycosyltransferase 4 family. MraY subfamily. It depends on Mg(2+) as a cofactor.

Its subcellular location is the cell membrane. It catalyses the reaction UDP-N-acetyl-alpha-D-muramoyl-L-alanyl-gamma-D-glutamyl-meso-2,6-diaminopimeloyl-D-alanyl-D-alanine + di-trans,octa-cis-undecaprenyl phosphate = di-trans,octa-cis-undecaprenyl diphospho-N-acetyl-alpha-D-muramoyl-L-alanyl-D-glutamyl-meso-2,6-diaminopimeloyl-D-alanyl-D-alanine + UMP. Its pathway is cell wall biogenesis; peptidoglycan biosynthesis. Functionally, catalyzes the initial step of the lipid cycle reactions in the biosynthesis of the cell wall peptidoglycan: transfers peptidoglycan precursor phospho-MurNAc-pentapeptide from UDP-MurNAc-pentapeptide onto the lipid carrier undecaprenyl phosphate, yielding undecaprenyl-pyrophosphoryl-MurNAc-pentapeptide, known as lipid I. In Deinococcus radiodurans (strain ATCC 13939 / DSM 20539 / JCM 16871 / CCUG 27074 / LMG 4051 / NBRC 15346 / NCIMB 9279 / VKM B-1422 / R1), this protein is Phospho-N-acetylmuramoyl-pentapeptide-transferase.